Consider the following 337-residue polypeptide: MIEADRLISNSFESRDDEVIDRAIRPKLLNDYQGQDHVRGQMEIFIKAAQLREEALDHLLIFGPPGLGKTTLANIVANEMGVSIRTTSGPVLEKAGDLAALLTNLEPNDVLFIDEIHRLSPHVEEVLYPAMEDYQLDIMIGEGPAARSIKIDLPPFTLIGATTRAGSLTSPLRDRFGITQRLEYYKVDDLKDIVQRSANCLGLSMEEEGALEMAQRARGTPRIANRLLRRVRDYAEVVGNGIICSDTAKKALDMLDVDSSGFDYMDRKLLLAIIDKFMGGPVGLDNLAAAIGEEKDTIEDVLEPYLIQQGFLQRTPRGRIATHRAYLHFGLDIPEAR.

Positions 4–185 (ADRLISNSFE…FGITQRLEYY (182 aa)) are large ATPase domain (RuvB-L). Residues Ile24, Arg25, Gly66, Lys69, Thr70, Thr71, 132–134 (EDY), Arg175, Tyr185, and Arg222 each bind ATP. Residue Thr70 participates in Mg(2+) binding. The interval 186 to 256 (KVDDLKDIVQ…TAKKALDMLD (71 aa)) is small ATPAse domain (RuvB-S). The interval 259–337 (SSGFDYMDRK…HFGLDIPEAR (79 aa)) is head domain (RuvB-H). DNA-binding residues include Arg314 and Arg319.

Belongs to the RuvB family. Homohexamer. Forms an RuvA(8)-RuvB(12)-Holliday junction (HJ) complex. HJ DNA is sandwiched between 2 RuvA tetramers; dsDNA enters through RuvA and exits via RuvB. An RuvB hexamer assembles on each DNA strand where it exits the tetramer. Each RuvB hexamer is contacted by two RuvA subunits (via domain III) on 2 adjacent RuvB subunits; this complex drives branch migration. In the full resolvosome a probable DNA-RuvA(4)-RuvB(12)-RuvC(2) complex forms which resolves the HJ.

Its subcellular location is the cytoplasm. It catalyses the reaction ATP + H2O = ADP + phosphate + H(+). The RuvA-RuvB-RuvC complex processes Holliday junction (HJ) DNA during genetic recombination and DNA repair, while the RuvA-RuvB complex plays an important role in the rescue of blocked DNA replication forks via replication fork reversal (RFR). RuvA specifically binds to HJ cruciform DNA, conferring on it an open structure. The RuvB hexamer acts as an ATP-dependent pump, pulling dsDNA into and through the RuvAB complex. RuvB forms 2 homohexamers on either side of HJ DNA bound by 1 or 2 RuvA tetramers; 4 subunits per hexamer contact DNA at a time. Coordinated motions by a converter formed by DNA-disengaged RuvB subunits stimulates ATP hydrolysis and nucleotide exchange. Immobilization of the converter enables RuvB to convert the ATP-contained energy into a lever motion, pulling 2 nucleotides of DNA out of the RuvA tetramer per ATP hydrolyzed, thus driving DNA branch migration. The RuvB motors rotate together with the DNA substrate, which together with the progressing nucleotide cycle form the mechanistic basis for DNA recombination by continuous HJ branch migration. Branch migration allows RuvC to scan DNA until it finds its consensus sequence, where it cleaves and resolves cruciform DNA. This Photobacterium profundum (strain SS9) protein is Holliday junction branch migration complex subunit RuvB.